A 360-amino-acid polypeptide reads, in one-letter code: Peptide chain release factor 1 (360 aa).

Glutamine 235 is subject to N5-methylglutamine. The disordered stretch occupies residues arginine 284–arginine 303.

It belongs to the prokaryotic/mitochondrial release factor family. In terms of processing, methylated by PrmC. Methylation increases the termination efficiency of RF1.

The protein resides in the cytoplasm. Peptide chain release factor 1 directs the termination of translation in response to the peptide chain termination codons UAG and UAA. This Bordetella avium (strain 197N) protein is Peptide chain release factor 1.